We begin with the raw amino-acid sequence, 196 residues long: ATP-dependent Clp protease proteolytic subunit (196 aa).

Catalysis depends on Ser101, which acts as the Nucleophile. Residue His126 is part of the active site.

The protein belongs to the peptidase S14 family. Component of the chloroplastic Clp protease core complex.

The protein localises to the plastid. It is found in the chloroplast stroma. It carries out the reaction Hydrolysis of proteins to small peptides in the presence of ATP and magnesium. alpha-casein is the usual test substrate. In the absence of ATP, only oligopeptides shorter than five residues are hydrolyzed (such as succinyl-Leu-Tyr-|-NHMec, and Leu-Tyr-Leu-|-Tyr-Trp, in which cleavage of the -Tyr-|-Leu- and -Tyr-|-Trp bonds also occurs).. Its function is as follows. Cleaves peptides in various proteins in a process that requires ATP hydrolysis. Has a chymotrypsin-like activity. Plays a major role in the degradation of misfolded proteins. In Morus indica (Mulberry), this protein is ATP-dependent Clp protease proteolytic subunit.